The following is a 467-amino-acid chain: Probable tryptophanase (467 aa).

Position 263 is an N6-(pyridoxal phosphate)lysine (Lys263).

Belongs to the beta-eliminating lyase family. Requires pyridoxal 5'-phosphate as cofactor.

It carries out the reaction L-tryptophan + H2O = indole + pyruvate + NH4(+). The protein operates within amino-acid degradation; L-tryptophan degradation via pyruvate pathway; indole and pyruvate from L-tryptophan: step 1/1. This chain is Probable tryptophanase (tnaA), found in Aeropyrum pernix (strain ATCC 700893 / DSM 11879 / JCM 9820 / NBRC 100138 / K1).